Consider the following 137-residue polypeptide: Large ribosomal subunit protein uL14A (137 aa).

Ser2 carries the N-acetylserine modification. Lys106 and Lys110 each carry N6,N6-dimethyllysine; by RKM1.

This sequence belongs to the universal ribosomal protein uL14 family. As to quaternary structure, component of the large ribosomal subunit (LSU). Mature yeast ribosomes consist of a small (40S) and a large (60S) subunit. The 40S small subunit contains 1 molecule of ribosomal RNA (18S rRNA) and 33 different proteins (encoded by 57 genes). The large 60S subunit contains 3 rRNA molecules (25S, 5.8S and 5S rRNA) and 46 different proteins (encoded by 81 genes). In terms of processing, methylated by RKM1 at 2 different sites, but it is unclear which are the 2 methylated residues among Lys-40, Lys-106 and/or Lys-110.

Its subcellular location is the cytoplasm. Functionally, component of the ribosome, a large ribonucleoprotein complex responsible for the synthesis of proteins in the cell. The small ribosomal subunit (SSU) binds messenger RNAs (mRNAs) and translates the encoded message by selecting cognate aminoacyl-transfer RNA (tRNA) molecules. The large subunit (LSU) contains the ribosomal catalytic site termed the peptidyl transferase center (PTC), which catalyzes the formation of peptide bonds, thereby polymerizing the amino acids delivered by tRNAs into a polypeptide chain. The nascent polypeptides leave the ribosome through a tunnel in the LSU and interact with protein factors that function in enzymatic processing, targeting, and the membrane insertion of nascent chains at the exit of the ribosomal tunnel. This is Large ribosomal subunit protein uL14A from Saccharomyces cerevisiae (strain ATCC 204508 / S288c) (Baker's yeast).